We begin with the raw amino-acid sequence, 612 residues long: Glutamine--fructose-6-phosphate aminotransferase [isomerizing] (612 aa).

The active-site Nucleophile; for GATase activity is the Cys2. In terms of domain architecture, Glutamine amidotransferase type-2 spans 2 to 217; sequence CGIVGGVAER…EGDIARLTRD (216 aa). 2 consecutive SIS domains span residues 283–428 and 461–602; these read AEAD…VKEQ and LSEL…VDQP. Lys607 serves as the catalytic For Fru-6P isomerization activity.

In terms of assembly, homodimer.

The protein localises to the cytoplasm. It catalyses the reaction D-fructose 6-phosphate + L-glutamine = D-glucosamine 6-phosphate + L-glutamate. Its function is as follows. Catalyzes the first step in hexosamine metabolism, converting fructose-6P into glucosamine-6P using glutamine as a nitrogen source. The chain is Glutamine--fructose-6-phosphate aminotransferase [isomerizing] from Acinetobacter baylyi (strain ATCC 33305 / BD413 / ADP1).